Reading from the N-terminus, the 210-residue chain is Large ribosomal subunit protein uL3 (210 aa).

It belongs to the universal ribosomal protein uL3 family. As to quaternary structure, part of the 50S ribosomal subunit. Forms a cluster with proteins L14 and L19.

Its function is as follows. One of the primary rRNA binding proteins, it binds directly near the 3'-end of the 23S rRNA, where it nucleates assembly of the 50S subunit. The sequence is that of Large ribosomal subunit protein uL3 from Geobacter metallireducens (strain ATCC 53774 / DSM 7210 / GS-15).